A 280-amino-acid polypeptide reads, in one-letter code: Shikimate dehydrogenase (NADP(+)) (280 aa).

Residues 15–17 (SLS) and T62 each bind shikimate. The active-site Proton acceptor is the K66. Shikimate is bound by residues N88 and D104. Residues 128–132 (GAGGA), 151–156 (NRTEER), and I222 each bind NADP(+). Residue Y224 participates in shikimate binding. G245 serves as a coordination point for NADP(+).

The protein belongs to the shikimate dehydrogenase family. Homodimer.

The catalysed reaction is shikimate + NADP(+) = 3-dehydroshikimate + NADPH + H(+). The protein operates within metabolic intermediate biosynthesis; chorismate biosynthesis; chorismate from D-erythrose 4-phosphate and phosphoenolpyruvate: step 4/7. Functionally, involved in the biosynthesis of the chorismate, which leads to the biosynthesis of aromatic amino acids. Catalyzes the reversible NADPH linked reduction of 3-dehydroshikimate (DHSA) to yield shikimate (SA). The polypeptide is Shikimate dehydrogenase (NADP(+)) (Methanosarcina acetivorans (strain ATCC 35395 / DSM 2834 / JCM 12185 / C2A)).